Consider the following 884-residue polypeptide: Probable mixed-linked glucan synthase 9 (884 aa).

Residues 1 to 27 are compositionally biased toward low complexity; sequence MALSPAAAGRTGRNNNNDAGLADPLLP. The tract at residues 1–34 is disordered; sequence MALSPAAAGRTGRNNNNDAGLADPLLPAGGGGGG. 2 helical membrane passes run 73-93 and 104-124; these read VLLH…VLFL and AMWL…TWLL. Residue D195 is part of the active site. 2 residues coordinate substrate: D396 and D398. Residue D565 is part of the active site. 6 consecutive transmembrane segments (helical) span residues 640–660, 672–692, 708–728, 765–785, 802–822, and 830–850; these read TAYP…VIWL, FSTY…IGLV, EQFY…HIVL, LLAP…AAAG, AGLV…LGIM, and CALF…FVAV.

The protein belongs to the glycosyltransferase 2 family. Plant cellulose synthase-like F subfamily.

It localises to the golgi apparatus membrane. In terms of biological role, may catalyze both beta-1,3 and beta-1,4 glycosidic linkage on beta-D-glucan. Essential for (1,3;1,4)-beta-D-glucans synthesis in grasses and cereals (Poaceae). The mixed-linked glucans (which are not present in walls of dicotyledons or most other monocotyledonous plants) are particularly important constituents of the walls of the starchy endosperm and aleurone cells of cereal grains such as oats, wheat, rice and barley. They can account for up to 70% by weight of the wall. This is Probable mixed-linked glucan synthase 9 (CSLF9) from Oryza sativa subsp. japonica (Rice).